A 503-amino-acid chain; its full sequence is Probable cytosol aminopeptidase (503 aa).

The Mn(2+) site is built by K270 and D275. Residue K282 is part of the active site. Mn(2+) contacts are provided by D293, D352, and E354. Residue R356 is part of the active site.

The protein belongs to the peptidase M17 family. Mn(2+) is required as a cofactor.

It is found in the cytoplasm. It catalyses the reaction Release of an N-terminal amino acid, Xaa-|-Yaa-, in which Xaa is preferably Leu, but may be other amino acids including Pro although not Arg or Lys, and Yaa may be Pro. Amino acid amides and methyl esters are also readily hydrolyzed, but rates on arylamides are exceedingly low.. The enzyme catalyses Release of an N-terminal amino acid, preferentially leucine, but not glutamic or aspartic acids.. In terms of biological role, presumably involved in the processing and regular turnover of intracellular proteins. Catalyzes the removal of unsubstituted N-terminal amino acids from various peptides. The protein is Probable cytosol aminopeptidase of Yersinia pseudotuberculosis serotype O:1b (strain IP 31758).